Consider the following 314-residue polypeptide: MSLNIITEKDKKQSYNLNKLQKRLRRNVGNAIADFNMIENGDKVMVCLSGGKDSYTLLDILLNLRLNAPIHFDIVAVNLDQKQPGFPEHILPEYLKSISVDYKIVAENTYGIVKEKIPEGKTTCSLCSRLRRGILYRTATELGATKIALGHHRDDMLETLFLNMFYGGKLKSMPPKLISDDGKQIVIRPLAYCKEKDIEKYAVAKQFPIIPCNLCGSQPNLQRQVVKEMLQKWDRQYPGRIETMFSAIQNIVPSHLCDSNLFDFKRIRHGKIPEGIEGDIAFDKEAFSPTPLVQENDEKIDFIQGEMISFKEVN.

The PP-loop motif signature appears at Ser49–Ser54. Residues Cys124, Cys127, and Cys215 each coordinate [4Fe-4S] cluster.

Belongs to the TtcA family. As to quaternary structure, homodimer. Mg(2+) serves as cofactor. It depends on [4Fe-4S] cluster as a cofactor.

It localises to the cytoplasm. The catalysed reaction is cytidine(32) in tRNA + S-sulfanyl-L-cysteinyl-[cysteine desulfurase] + AH2 + ATP = 2-thiocytidine(32) in tRNA + L-cysteinyl-[cysteine desulfurase] + A + AMP + diphosphate + H(+). It participates in tRNA modification. In terms of biological role, catalyzes the ATP-dependent 2-thiolation of cytidine in position 32 of tRNA, to form 2-thiocytidine (s(2)C32). The sulfur atoms are provided by the cysteine/cysteine desulfurase (IscS) system. The chain is tRNA-cytidine(32) 2-sulfurtransferase from Histophilus somni (strain 2336) (Haemophilus somnus).